Here is a 417-residue protein sequence, read N- to C-terminus: Gamma-glutamyl phosphate reductase (417 aa).

This sequence belongs to the gamma-glutamyl phosphate reductase family.

It localises to the cytoplasm. The enzyme catalyses L-glutamate 5-semialdehyde + phosphate + NADP(+) = L-glutamyl 5-phosphate + NADPH + H(+). Its pathway is amino-acid biosynthesis; L-proline biosynthesis; L-glutamate 5-semialdehyde from L-glutamate: step 2/2. Its function is as follows. Catalyzes the NADPH-dependent reduction of L-glutamate 5-phosphate into L-glutamate 5-semialdehyde and phosphate. The product spontaneously undergoes cyclization to form 1-pyrroline-5-carboxylate. The polypeptide is Gamma-glutamyl phosphate reductase (Serratia proteamaculans (strain 568)).